Consider the following 529-residue polypeptide: NAD(P)H-quinone oxidoreductase chain 4 1 (529 aa).

13 consecutive transmembrane segments (helical) span residues 4–24 (FPWL…IPFI), 36–56 (WYAL…FTNF), 91–111 (LILL…PVTL), 115–135 (LFYF…AVQD), 137–157 (LVFF…LAIW), 169–189 (FILY…AMAF), 209–229 (GFQL…LPIV), 243–263 (TAPV…YALI), 277–297 (FAPV…LTSY), 314–334 (IGFV…GAVL), 335–355 (QMVS…ATYD), 387–407 (LALP…GFAT), and 417–437 (VIVV…LLSM).

This sequence belongs to the complex I subunit 4 family.

The protein resides in the cellular thylakoid membrane. The catalysed reaction is a plastoquinone + NADH + (n+1) H(+)(in) = a plastoquinol + NAD(+) + n H(+)(out). It catalyses the reaction a plastoquinone + NADPH + (n+1) H(+)(in) = a plastoquinol + NADP(+) + n H(+)(out). Functionally, NDH-1 shuttles electrons from NAD(P)H, via FMN and iron-sulfur (Fe-S) centers, to quinones in the respiratory chain. The immediate electron acceptor for the enzyme in this species is believed to be plastoquinone. Couples the redox reaction to proton translocation (for every two electrons transferred, four hydrogen ions are translocated across the cytoplasmic membrane), and thus conserves the redox energy in a proton gradient. This is NAD(P)H-quinone oxidoreductase chain 4 1 from Thermosynechococcus vestitus (strain NIES-2133 / IAM M-273 / BP-1).